A 197-amino-acid polypeptide reads, in one-letter code: Probable UbiX-like flavin prenyltransferase (197 aa).

FMN contacts are provided by residues 9–11 (GAT), S36, 87–90 (SMKT), and R122.

Belongs to the UbiX/PAD1 family. YclB subfamily. Homododecamer.

It carries out the reaction dimethylallyl phosphate + FMNH2 = prenylated FMNH2 + phosphate. Its function is as follows. Flavin prenyltransferase that catalyzes the synthesis of the prenylated FMN cofactor (prenyl-FMN) for phenolic acid decarboxylase C. Involved in the decarboxylation and detoxification of phenolic derivatives under both aerobic and anaerobic conditions. This chain is Probable UbiX-like flavin prenyltransferase (ecdB), found in Escherichia coli.